Here is a 402-residue protein sequence, read N- to C-terminus: Leucine aminopeptidase 1 (402 aa).

An N-terminal signal peptide occupies residues 1-18 (MKISNASLLALLLPAASA). Positions 19-92 (RFVEQAEQNR…GTFNKRPYKK (74 aa)) are excised as a propeptide. N-linked (GlcNAc...) asparagine glycans are attached at residues Asn-111 and Asn-184. Residues His-192, Asp-211, Glu-250, and Asp-277 each contribute to the Zn(2+) site. An N-linked (GlcNAc...) asparagine glycan is attached at Asn-304. The cysteines at positions 326 and 330 are disulfide-linked. Residue His-359 coordinates Zn(2+).

The protein belongs to the peptidase M28 family. M28E subfamily. In terms of assembly, monomer. It depends on Zn(2+) as a cofactor.

The protein localises to the secreted. Extracellular aminopeptidase that allows assimilation of proteinaceous substrates. The chain is Leucine aminopeptidase 1 (lap1) from Neurospora crassa (strain ATCC 24698 / 74-OR23-1A / CBS 708.71 / DSM 1257 / FGSC 987).